The primary structure comprises 446 residues: MKAAKNNVYTVSRLNGEVRQILEGQIGKIWLNGEISNFSSPSSGHWYLTLKDTHSQIRCAMFKGRNQSVNFRPVNGQQVLVKGAISVYEPRGDYQLLLESMLPAGDGLLAQEYEALKMKLAAEGLFASETKRALPSNIQRIGIITSATGAALRDVLHVLQRRDASIEVVVYPTQVQGTSASDNICRAIELANKRLEVDVLLLTRGGGSLEDLWCFNNEMLAHSIYNSALPVVSAVGHEVDTTISDYVADVRAPTPSAGAELLSQDKGNKAQKLALMLSRLAQGMRHYQLSQDKHFVNLQHRLNQQDPKRRLQQLEQQFDEFQLRLDNAFKHRLSRLTLRHERLSAQLQRQSPEHKLRLAHQALTHVSGRFDDAIKDTLGSAEQRLKQAVHQLEAMSPLATLSRGYSISSNANGKVITDASKVKVGDSLHTRLAKGQLVSTVIDVEM.

This sequence belongs to the XseA family. As to quaternary structure, heterooligomer composed of large and small subunits.

The protein localises to the cytoplasm. The enzyme catalyses Exonucleolytic cleavage in either 5'- to 3'- or 3'- to 5'-direction to yield nucleoside 5'-phosphates.. Bidirectionally degrades single-stranded DNA into large acid-insoluble oligonucleotides, which are then degraded further into small acid-soluble oligonucleotides. This chain is Exodeoxyribonuclease 7 large subunit, found in Shewanella denitrificans (strain OS217 / ATCC BAA-1090 / DSM 15013).